The primary structure comprises 444 residues: Sprouty-related, EVH1 domain-containing protein 1 (444 aa).

Position 2 is an N-acetylserine (serine 2). Residues alanine 6–isoleucine 123 enclose the WH1 domain. Positions isoleucine 123–leucine 151 are disordered. Residues glutamate 135–serine 147 are compositionally biased toward acidic residues. N6-methyllysine is present on lysine 224. Residues serine 233–proline 285 form the KBD domain. Residues serine 238 and serine 308 each carry the phosphoserine modification. The segment at serine 333 to glycine 444 is required for interaction with TESK1. One can recognise an SPR domain in the interval arginine 334–alanine 442.

Homodimer and heterodimer. Able to interact with SPRED2 to form heterodimers. Interacts (via C-terminus) with TAOK1/MARKK (via C-terminus); the interaction does not affect TAOK1 kinase activity. Interacts (via C-terminus) with TESK1 (via C-terminus); the interaction inhibits TESK1 kinase activity. Interacts with CAV1. Interacts with RAS. Interacts with palmitoyltransferase ZDHHC17/HIP14; the interaction leads to palmitoylation of SPRED1. Palmitoylated by ZDHHC17/HIP14. In terms of processing, phosphorylated on tyrosine. Post-translationally, ubiquitinated. Weakly expressed in embryonic cell line HEK293.

Its subcellular location is the cell membrane. The protein resides in the membrane. It is found in the caveola. It localises to the nucleus. Tyrosine kinase substrate that inhibits growth-factor-mediated activation of MAP kinase. Negatively regulates hematopoiesis of bone marrow. Inhibits fibroblast growth factor (FGF)-induced retinal lens fiber differentiation, probably by inhibiting FGF-mediated phosphorylation of ERK1/2. Attenuates actin stress fiber formation via inhibition of TESK1-mediated phosphorylation of cofilin. Inhibits TGFB-induced epithelial-to-mesenchymal transition in lens epithelial cells. This is Sprouty-related, EVH1 domain-containing protein 1 (SPRED1) from Homo sapiens (Human).